We begin with the raw amino-acid sequence, 718 residues long: MFQMAKRVLLSTTLTFSLLAGSALPFLPASAIYADADTAVTNKQNFSTDVIYQVFTDRFLDGNPSNNPTGAAFDGTCSNLKLYCGGDWQGLVNKINDNYFSDLGVTALWISQPVENIFATINYSGVTNTAYHGYWARDFKKTNPYFGTMTDFQNLVTTAHAKGIKIIIDFAPNHTSPAMETDTSFAENGKLYDNGNLVGGYTNDTNGYFHHNGGSDFSTLENGIYKNLYDLADLNHNNSTIDTYFKDAIKLWLDMGVDGIRVDAVKHMPQGWQKNWMSSIYAHKPVFTFGEWFLGSAAPDADNTDFANESGMSLLDFRFNSAVRNVFRDNTSNMYALDSMLTATAADYNQVNDQVTFIDNHDMDRFKTSAVNNRRLEQALAFTLTSRGVPAIYYGTEQYLTGNGDPDNRGKMPSFSKSTTAFNVISKLAPLRKSNPAIAYGSTQQRWINNDVYIYERKFGKSVAVVAVNRNLTTPTSITNLNTSLPSGTYTDVLGGVLNGNNITSSGGNISSFTLAAGATAVWQYTASETTPTIGHVGPVMGKPGNVVTIDGRGFGSAKGTVYFGTTAVTGSAITSWEDTQIKVTIPPVAGGDYAVKVAANGVNSNAYNDFTILSGDQVSVRFVINNATTALGENIYLTGNVSELGNWTTGAASIGPAFNQVIHAYPTWYYDVSVPAGKQLEFKFFKKNGATITWEGGSNHTFTTPTSGTATVTINWQ.

Positions 1–34 are cleaved as a signal peptide; the sequence is MFQMAKRVLLSTTLTFSLLAGSALPFLPASAIYA. The A1 stretch occupies residues 35–172; it reads DADTAVTNKQ…GIKIIIDFAP (138 aa). 4 residues coordinate Ca(2+): Asp-61, Asn-63, Asn-66, and Asn-67. Cys-77 and Cys-84 form a disulfide bridge. Ca(2+) is bound by residues Gly-85 and Asp-87. Substrate is bound at residue 134–135; that stretch reads YW. A Ca(2+)-binding site is contributed by Asn-173. The interval 173–236 is b; it reads NHTSPAMETD…NLYDLADLNH (64 aa). Position 174 (His-174) interacts with substrate. Ile-224 provides a ligand contact to Ca(2+). 227 to 230 is a substrate binding site; that stretch reads NLYD. Residue Asp-233 coordinates Ca(2+). The A2 stretch occupies residues 237-440; it reads NNSTIDTYFK…LRKSNPAIAY (204 aa). A substrate-binding site is contributed by Arg-261. The active-site Nucleophile is the Asp-263. 266-267 provides a ligand contact to substrate; sequence KH. His-267 lines the Ca(2+) pocket. Glu-291 acts as the Proton donor in catalysis. Substrate contacts are provided by His-361, Asp-405, and Arg-409. The interval 441–528 is c; the sequence is GSTQQRWINN…ATAVWQYTAS (88 aa). Positions 529 to 614 are d; it reads ETTPTIGHVG…SNAYNDFTIL (86 aa). Positions 532 to 612 constitute an IPT/TIG domain; sequence PTIGHVGPVM…VNSNAYNDFT (81 aa). One can recognise a CBM20 domain in the interval 613–718; that stretch reads ILSGDQVSVR…GTATVTINWQ (106 aa). The segment at 615–718 is e; that stretch reads SGDQVSVRFV…GTATVTINWQ (104 aa).

This sequence belongs to the glycosyl hydrolase 13 family. Monomer. The cofactor is Ca(2+).

It is found in the secreted. It carries out the reaction Cyclizes part of a (1-&gt;4)-alpha-D-glucan chain by formation of a (1-&gt;4)-alpha-D-glucosidic bond.. The protein is Cyclomaltodextrin glucanotransferase (cgtA) of Bacillus licheniformis.